Here is a 448-residue protein sequence, read N- to C-terminus: Phosphoglucosamine mutase (448 aa).

S100 acts as the Phosphoserine intermediate in catalysis. S100, D240, D242, and D244 together coordinate Mg(2+). Phosphoserine is present on S100.

Belongs to the phosphohexose mutase family. It depends on Mg(2+) as a cofactor. Post-translationally, activated by phosphorylation.

The enzyme catalyses alpha-D-glucosamine 1-phosphate = D-glucosamine 6-phosphate. In terms of biological role, catalyzes the conversion of glucosamine-6-phosphate to glucosamine-1-phosphate. The sequence is that of Phosphoglucosamine mutase from Clostridium perfringens (strain ATCC 13124 / DSM 756 / JCM 1290 / NCIMB 6125 / NCTC 8237 / Type A).